A 1025-amino-acid polypeptide reads, in one-letter code: MSEGKSPAKKRARRSLSISKTKKNECNSIISFFNNVPPAKLACPICSKMVPRYDLNWHLDEKCANNDNITPVDLRHVGFTDSSGSTVNLTNTVLENVTPGKLSPSKASLTPDPSDSAKMGIKQQTSPYFKNNKDLVFKNQDKLRHHNVKVITLGSLSSKLSRRYTEARRSICKKNEEFASKSPQSPSSTVVRSPVDNCSEIEDKDQILENSSQKENVFTCDSLNEQRTEHSVEDTKVLEAESQEATQECGRSPLTPAFSDNAFVLFSPDLTRGNPLRSTSEDSLEWETITGIDGKDVEKCEAGSCEEVKVTVASEAKTQLSDWEAKCHSSTPDDSKGCNIQDLLLEGDSDLKNEITCRIPLEQGSSCDVPDKTVTVPPSHPYYLRSFLVVLKAVFENEEDRMLFDEHEKEIVTKFYQLSASAQKLYVRLFQRKFSWLKMNKLEYEEIAPDLTPVIGELQQAGFLQTESELQELSEVLELLSAPELKTLAKTFHLVNPNGQKQQLVDTFLKLAKQPSVCTWGKNQPGIGAVILKRAKGLAGQALRVCKGPRAVFSRVLLLFSLTDSLEDEEAACGGQGQLSTVLLVNLGRMEFPRYTINRKTQIFQDRDDLIRYAAAAHMLSDISTAMANGNWKEANELSQCAKSDWNKLKSHPSLRYHENLPLFLRCFTVGWIYTRILSRTVEILQRLHMYEEAVKELESLLSQRVYCPDSRGRWWDRLALNLHQHLKRLEPAIKCITEGLADPEVRTGHRLSLYQRALRLRESPSCQKYRHLFHQLPEVTVGDVKHVTITGRLCPQRGMGKSVFVMEAGGPTAPATVLCSVEEVALAYYRRSGFDQGIHGEGSTFSTLYGLLLWDIIFMDGIPDVFRNAYQASPLDLCTDSFFASRGPAIEARLQRIHSAPAESLRAWVAAAWQAQEGRVASIVSWDRFASLQQAQDLVSCLGGPVLSGVCRRLAADFRHCRGGLPDLVVWNSQSRHFKLVEVKGPNDRLSHKQMLWLDELQKLGADVEVCHVVAVGAKSKSLT.

The UBZ4-type zinc finger occupies 40–68 (KLACPICSKMVPRYDLNWHLDEKCANNDN). Cys-43, Cys-46, His-58, and Cys-63 together coordinate Zn(2+). The disordered stretch occupies residues 98-120 (TPGKLSPSKASLTPDPSDSAKMG). Phosphoserine is present on Ser-182. The stretch at 682-704 (VEILQRLHMYEEAVKELESLLSQ) forms a coiled coil. Mn(2+)-binding residues include Glu-842, Asp-968, Glu-983, and Val-984. Positions 903-1015 (AESLRAWVAA…GADVEVCHVV (113 aa)) constitute a VRR-NUC domain.

Belongs to the FAN1 family. In terms of assembly, interacts with FANCD2 (when monoubiquitinated). Interacts with FANCI, MLH1, MLH3 and PMS2. It depends on Mn(2+) as a cofactor. Mg(2+) serves as cofactor. Ubiquitinated and degraded during mitotic exit by the APC/C-Cdh1 complex.

It is found in the nucleus. It catalyses the reaction Hydrolytically removes 5'-nucleotides successively from the 3'-hydroxy termini of 3'-hydroxy-terminated oligonucleotides.. In terms of biological role, nuclease required for the repair of DNA interstrand cross-links (ICL) recruited at sites of DNA damage by monoubiquitinated FANCD2. Specifically involved in repair of ICL-induced DNA breaks by being required for efficient homologous recombination, probably in the resolution of homologous recombination intermediates. Not involved in DNA double-strand breaks resection. Acts as a 5'-3' exonuclease that anchors at a cut end of DNA and cleaves DNA successively at every third nucleotide, allowing to excise an ICL from one strand through flanking incisions. Probably keeps excising with 3'-flap annealing until it reaches and unhooks the ICL. Acts at sites that have a 5'-terminal phosphate anchor at a nick or a 1- or 2-nucleotide flap and is augmented by a 3' flap. Also has endonuclease activity toward 5'-flaps. The sequence is that of Fanconi-associated nuclease 1 (FAN1) from Ailuropoda melanoleuca (Giant panda).